We begin with the raw amino-acid sequence, 323 residues long: Quinolinate synthase (323 aa).

The iminosuccinate site is built by His-37 and Ser-54. Cys-99 provides a ligand contact to [4Fe-4S] cluster. Iminosuccinate-binding positions include 125–127 (YIN) and Ser-142. Cys-185 is a [4Fe-4S] cluster binding site. Iminosuccinate is bound by residues 211–213 (HPE) and Thr-228. Cys-278 is a [4Fe-4S] cluster binding site.

It belongs to the quinolinate synthase family. Type 2 subfamily. [4Fe-4S] cluster is required as a cofactor.

It localises to the cytoplasm. The enzyme catalyses iminosuccinate + dihydroxyacetone phosphate = quinolinate + phosphate + 2 H2O + H(+). It participates in cofactor biosynthesis; NAD(+) biosynthesis; quinolinate from iminoaspartate: step 1/1. Functionally, catalyzes the condensation of iminoaspartate with dihydroxyacetone phosphate to form quinolinate. The sequence is that of Quinolinate synthase from Trichodesmium erythraeum (strain IMS101).